The chain runs to 719 residues: Potassium channel KOR2 (719 aa).

Over 1–63 (MAEEYELNEI…VIHPNGRWYR (63 aa)) the chain is Cytoplasmic. A helical transmembrane segment spans residues 64–84 (IWANMMFLWSIYSTFFTPFEF). The Extracellular segment spans residues 85–93 (SFFRGLPDQ). Residues 94 to 114 (LLDLECVQLVFLADVAVHFFL) form a helical membrane-spanning segment. At 115-137 (AYRDPHTYRMVHDKRHIALRYIK) the chain is on the cytoplasmic side. Residues 138–158 (GSFALDVLGCFPWDAIYKVTG) traverse the membrane as a helical segment. The Extracellular portion of the chain corresponds to 159-164 (RVEAVR). A helical; Voltage-sensor transmembrane segment spans residues 165 to 185 (WLVWVRLYRGRKVMAFFKRVE). The Cytoplasmic portion of the chain corresponds to 186-199 (KDIRVSYLLTRIVK). A helical membrane pass occupies residues 200 to 220 (LITVELYCTHTAACGFYYLAT). At 221–255 (TLPPAREGGTWIGSLSLGDARYINFREVDLLTRYV) the chain is on the extracellular side. The pore-forming intramembrane region spans 256 to 275 (TSLYLAIVTMATVGYGDIHA). The Extracellular segment spans residues 276-285 (VNTREMAFTV). The helical transmembrane segment at 286–306 (VYISFSIVLSAYLIGNMTALI) threads the bilayer. Residues 307–719 (VKGSRTERFR…LEQARTVATN (413 aa)) lie on the Cytoplasmic side of the membrane. Residue 383–503 (LFRGCSDDFL…SQILSNLLKG (121 aa)) coordinates a nucleoside 3',5'-cyclic phosphate. ANK repeat units follow at residues 523–556 (KQES…DPSK), 560–589 (DGRT…NVNS), 593–622 (FGNS…ILNL), 624–653 (DAGG…SPNC), and 657–686 (DQRT…DIQA).

This sequence belongs to the potassium channel family. Plant (TC 1.A.1.4) subfamily.

The protein resides in the membrane. Functionally, probable outward-rectifying potassium channel. In Oryza sativa subsp. japonica (Rice), this protein is Potassium channel KOR2.